We begin with the raw amino-acid sequence, 251 residues long: Aliphatic sulfonates import ATP-binding protein SsuB (251 aa).

In terms of domain architecture, ABC transporter spans V3–Q231. Residue G39–S46 participates in ATP binding.

It belongs to the ABC transporter superfamily. Aliphatic sulfonates importer (TC 3.A.1.17.2) family. In terms of assembly, the complex is composed of two ATP-binding proteins (SsuB), two transmembrane proteins (SsuC) and a solute-binding protein (SsuA).

It is found in the cell membrane. It carries out the reaction ATP + H2O + aliphatic sulfonate-[sulfonate-binding protein]Side 1 = ADP + phosphate + aliphatic sulfonateSide 2 + [sulfonate-binding protein]Side 1.. Part of the ABC transporter complex SsuABC involved in aliphatic sulfonates import. Responsible for energy coupling to the transport system. In Bacillus cereus (strain ZK / E33L), this protein is Aliphatic sulfonates import ATP-binding protein SsuB.